The chain runs to 200 residues: ATP-dependent Clp protease proteolytic subunit 2 (200 aa).

The Nucleophile role is filled by Ser-99. His-124 is an active-site residue.

Belongs to the peptidase S14 family. As to quaternary structure, fourteen ClpP subunits assemble into 2 heptameric rings which stack back to back to give a disk-like structure with a central cavity, resembling the structure of eukaryotic proteasomes.

It is found in the cytoplasm. The enzyme catalyses Hydrolysis of proteins to small peptides in the presence of ATP and magnesium. alpha-casein is the usual test substrate. In the absence of ATP, only oligopeptides shorter than five residues are hydrolyzed (such as succinyl-Leu-Tyr-|-NHMec, and Leu-Tyr-Leu-|-Tyr-Trp, in which cleavage of the -Tyr-|-Leu- and -Tyr-|-Trp bonds also occurs).. Functionally, cleaves peptides in various proteins in a process that requires ATP hydrolysis. Has a chymotrypsin-like activity. Plays a major role in the degradation of misfolded proteins. The sequence is that of ATP-dependent Clp protease proteolytic subunit 2 from Treponema denticola (strain ATCC 35405 / DSM 14222 / CIP 103919 / JCM 8153 / KCTC 15104).